The chain runs to 178 residues: Inorganic pyrophosphatase (178 aa).

Positions 30, 44, and 56 each coordinate substrate. Residues D66, D71, and D103 each coordinate Mg(2+). Y140 serves as a coordination point for substrate.

The protein belongs to the PPase family. As to quaternary structure, homohexamer. The cofactor is Mg(2+).

It is found in the cytoplasm. The enzyme catalyses diphosphate + H2O = 2 phosphate + H(+). In terms of biological role, catalyzes the hydrolysis of inorganic pyrophosphate (PPi) forming two phosphate ions. This is Inorganic pyrophosphatase from Pyrococcus furiosus (strain ATCC 43587 / DSM 3638 / JCM 8422 / Vc1).